A 510-amino-acid polypeptide reads, in one-letter code: MEIRAAEISAILKEQIANFGTEAESAEVGQVLSVGDGIARVYGLDNVQAGEMVEFANGVKGMALNLESDNVGIVIFGEDRGIKEGDVVKRTQTIVDVPVGKGLLGRVVDGLGNPIDGKGDLVDVERKRAEVKAPGIIPRKSVHEPVQTGIKAIDSLIPIGRGQRELIIGDRQTGKTAVILDTILNQKAVNDKAKDDSEKLFCVYVAVGQKRSTVAQVVKVLADHGALDYTIVVAATASEPAPLQFLAPYTGCTMGEFFRDNGMHAVIFYDDLTKQAVAYRQMSLLLRRPPGREAFPGDVFYLHSRLLERAAKLNDDNGAGSLTALPVIETQANDVSAYIPTNVISITDGQIFLETDLFFKGIRPAVNVGLSVSRVGSSAQIKAMKQVAGSIKLELAQYREMAAFAQFASDLDPATQKLLARGARLTELLKQAQYSPLAVEEQVCVIYAGTRGYLDKLKTTDVVRYEASLLGALRTSGADLLESIRTGKALSKEIEQKLVKFLDDFGKKFA.

Residue 169 to 176 (GDRQTGKT) participates in ATP binding.

The protein belongs to the ATPase alpha/beta chains family. F-type ATPases have 2 components, CF(1) - the catalytic core - and CF(0) - the membrane proton channel. CF(1) has five subunits: alpha(3), beta(3), gamma(1), delta(1), epsilon(1). CF(0) has four main subunits: a(1), b(1), b'(1) and c(9-12).

The protein localises to the cell inner membrane. It catalyses the reaction ATP + H2O + 4 H(+)(in) = ADP + phosphate + 5 H(+)(out). In terms of biological role, produces ATP from ADP in the presence of a proton gradient across the membrane. The alpha chain is a regulatory subunit. This chain is ATP synthase subunit alpha, found in Rhodospirillum rubrum (strain ATCC 11170 / ATH 1.1.1 / DSM 467 / LMG 4362 / NCIMB 8255 / S1).